A 392-amino-acid polypeptide reads, in one-letter code: Putative cystathionine gamma-lyase 2 (392 aa).

A disordered region spans residues 32–55 (LSSTYKQDNPGEPKGHDYSRAGNP). The segment covering 40 to 50 (NPGEPKGHDYS) has biased composition (basic and acidic residues). Residues arginine 51, tyrosine 103, and arginine 108 each coordinate substrate. N6-(pyridoxal phosphate)lysine is present on lysine 203. Position 330 (glutamate 330) interacts with substrate.

This sequence belongs to the trans-sulfuration enzymes family. Pyridoxal 5'-phosphate is required as a cofactor.

The protein resides in the cytoplasm. The enzyme catalyses L,L-cystathionine + H2O = 2-oxobutanoate + L-cysteine + NH4(+). The protein operates within amino-acid biosynthesis; L-cysteine biosynthesis; L-cysteine from L-homocysteine and L-serine: step 2/2. This is Putative cystathionine gamma-lyase 2 (cth-2) from Caenorhabditis elegans.